A 78-amino-acid polypeptide reads, in one-letter code: MKLTCMMIVAVLFLTAWTFVTADSRNGLEYLFPKAHYEMNPEASKLNKKRDCVAGGHFCGFPKIGGPCCSGWCFFVCA.

Positions 1–22 (MKLTCMMIVAVLFLTAWTFVTA) are cleaved as a signal peptide. Positions 23 to 48 (DSRNGLEYLFPKAHYEMNPEASKLNK) are excised as a propeptide. 3 disulfides stabilise this stretch: cysteine 52-cysteine 69, cysteine 59-cysteine 73, and cysteine 68-cysteine 77.

This sequence belongs to the conotoxin O1 superfamily. Expressed by the venom duct.

The protein resides in the secreted. Its function is as follows. Omega-conotoxins act at presynaptic membranes, they bind and block voltage-gated calcium channels (Cav). The sequence is that of Omega-conotoxin-like VnMKLT1-0111 from Conus ventricosus (Mediterranean cone).